A 496-amino-acid chain; its full sequence is Glycerol kinase 2 (496 aa).

Threonine 11 serves as a coordination point for ADP. 3 residues coordinate ATP: threonine 11, threonine 12, and serine 13. Residue threonine 11 coordinates sn-glycerol 3-phosphate. Residue arginine 15 coordinates ADP. Sn-glycerol 3-phosphate-binding residues include arginine 81, glutamate 82, tyrosine 133, and aspartate 242. Glycerol is bound by residues arginine 81, glutamate 82, tyrosine 133, aspartate 242, and glutamine 243. ADP contacts are provided by threonine 264 and glycine 307. Residues threonine 264, glycine 307, glutamine 311, and glycine 408 each contribute to the ATP site. Glycine 408 and asparagine 412 together coordinate ADP.

It belongs to the FGGY kinase family.

It catalyses the reaction glycerol + ATP = sn-glycerol 3-phosphate + ADP + H(+). The protein operates within polyol metabolism; glycerol degradation via glycerol kinase pathway; sn-glycerol 3-phosphate from glycerol: step 1/1. Its activity is regulated as follows. Inhibited by fructose 1,6-bisphosphate (FBP). Key enzyme in the regulation of glycerol uptake and metabolism. Catalyzes the phosphorylation of glycerol to yield sn-glycerol 3-phosphate. In Thermotoga maritima (strain ATCC 43589 / DSM 3109 / JCM 10099 / NBRC 100826 / MSB8), this protein is Glycerol kinase 2.